The chain runs to 490 residues: Betaine aldehyde dehydrogenase (490 aa).

K(+) is bound by residues Thr26, Ile27, and Asp93. 150-152 (GAW) serves as a coordination point for NAD(+). The active-site Charge relay system is the Lys162. 176-179 (KPSE) contributes to the NAD(+) binding site. Position 180 (Val180) interacts with K(+). An NAD(+)-binding site is contributed by 230 to 233 (GVAS). Leu246 provides a ligand contact to K(+). Glu252 functions as the Proton acceptor in the catalytic mechanism. Gly254, Cys286, and Glu387 together coordinate NAD(+). The active-site Nucleophile is the Cys286. A Cysteine sulfenic acid (-SOH) modification is found at Cys286. The K(+) site is built by Lys457 and Gly460. The active-site Charge relay system is the Glu464.

Belongs to the aldehyde dehydrogenase family. In terms of assembly, dimer of dimers. It depends on K(+) as a cofactor.

The enzyme catalyses betaine aldehyde + NAD(+) + H2O = glycine betaine + NADH + 2 H(+). Its pathway is amine and polyamine biosynthesis; betaine biosynthesis via choline pathway; betaine from betaine aldehyde: step 1/1. In terms of biological role, involved in the biosynthesis of the osmoprotectant glycine betaine. Catalyzes the irreversible oxidation of betaine aldehyde to the corresponding acid. The protein is Betaine aldehyde dehydrogenase of Escherichia coli O45:K1 (strain S88 / ExPEC).